A 375-amino-acid chain; its full sequence is Queuine tRNA-ribosyltransferase (375 aa).

Asp-94 (proton acceptor) is an active-site residue. Residues Asp-94–Phe-98, Asp-148, Gln-191, and Gly-218 each bind substrate. Residues Gly-249–Asp-255 form an RNA binding region. The active-site Nucleophile is the Asp-268. The tract at residues Thr-273–Arg-277 is RNA binding; important for wobble base 34 recognition. Zn(2+) contacts are provided by Cys-306, Cys-308, Cys-311, and His-337.

Belongs to the queuine tRNA-ribosyltransferase family. In terms of assembly, homodimer. Within each dimer, one monomer is responsible for RNA recognition and catalysis, while the other monomer binds to the replacement base PreQ1. Zn(2+) is required as a cofactor.

It carries out the reaction 7-aminomethyl-7-carbaguanine + guanosine(34) in tRNA = 7-aminomethyl-7-carbaguanosine(34) in tRNA + guanine. The protein operates within tRNA modification; tRNA-queuosine biosynthesis. Functionally, catalyzes the base-exchange of a guanine (G) residue with the queuine precursor 7-aminomethyl-7-deazaguanine (PreQ1) at position 34 (anticodon wobble position) in tRNAs with GU(N) anticodons (tRNA-Asp, -Asn, -His and -Tyr). Catalysis occurs through a double-displacement mechanism. The nucleophile active site attacks the C1' of nucleotide 34 to detach the guanine base from the RNA, forming a covalent enzyme-RNA intermediate. The proton acceptor active site deprotonates the incoming PreQ1, allowing a nucleophilic attack on the C1' of the ribose to form the product. After dissociation, two additional enzymatic reactions on the tRNA convert PreQ1 to queuine (Q), resulting in the hypermodified nucleoside queuosine (7-(((4,5-cis-dihydroxy-2-cyclopenten-1-yl)amino)methyl)-7-deazaguanosine). The chain is Queuine tRNA-ribosyltransferase from Thermoanaerobacter pseudethanolicus (strain ATCC 33223 / 39E) (Clostridium thermohydrosulfuricum).